Consider the following 1183-residue polypeptide: DNA-directed RNA polymerase subunit beta (1183 aa).

Residues Asp-1153–Val-1162 are compositionally biased toward acidic residues. Residues Asp-1153–Asp-1183 form a disordered region. A compositionally biased stretch (polar residues) spans Asp-1173–Asp-1183.

Belongs to the RNA polymerase beta chain family. The RNAP catalytic core consists of 2 alpha, 1 beta, 1 beta' and 1 omega subunit. When a sigma factor is associated with the core the holoenzyme is formed, which can initiate transcription.

It catalyses the reaction RNA(n) + a ribonucleoside 5'-triphosphate = RNA(n+1) + diphosphate. DNA-dependent RNA polymerase catalyzes the transcription of DNA into RNA using the four ribonucleoside triphosphates as substrates. In Staphylococcus saprophyticus subsp. saprophyticus (strain ATCC 15305 / DSM 20229 / NCIMB 8711 / NCTC 7292 / S-41), this protein is DNA-directed RNA polymerase subunit beta.